The following is a 576-amino-acid chain: Polypeptide N-acetylgalactosaminyltransferase 12 (576 aa).

At 1–19 (MWGRAVRRRCPRGLRRGRE) the chain is on the cytoplasmic side. The helical; Signal-anchor for type II membrane protein transmembrane segment at 20-37 (ALLALLALAGLGALLRAR) threads the bilayer. Positions 38–58 (SRSGTVDPGPPRTPLPGRHEP) are disordered. Residues 38–576 (SRSGTVDPGP…QRWFFKERMS (539 aa)) lie on the Lumenal side of the membrane. Intrachain disulfides connect C120–C353, C344–C417, C453–C474, C501–C516, and C542–C561. The tract at residues 130 to 239 (LPKTSVVIAF…EGWLEPLLQR (110 aa)) is catalytic subdomain A. Residues D171 and R200 each contribute to the substrate site. Mn(2+) is bound by residues D223 and H225. The tract at residues 299-361 (VIRSPTMAGG…PCSHVGHVFP (63 aa)) is catalytic subdomain B. A substrate-binding site is contributed by W330. H358 provides a ligand contact to Mn(2+). Y366 provides a ligand contact to substrate. Residues 440 to 572 (FFGMLQNRGL…NSDNQRWFFK (133 aa)) form the Ricin B-type lectin domain.

This sequence belongs to the glycosyltransferase 2 family. GalNAc-T subfamily. It depends on Mn(2+) as a cofactor.

It localises to the golgi apparatus membrane. The catalysed reaction is L-seryl-[protein] + UDP-N-acetyl-alpha-D-galactosamine = a 3-O-[N-acetyl-alpha-D-galactosaminyl]-L-seryl-[protein] + UDP + H(+). It carries out the reaction L-threonyl-[protein] + UDP-N-acetyl-alpha-D-galactosamine = a 3-O-[N-acetyl-alpha-D-galactosaminyl]-L-threonyl-[protein] + UDP + H(+). It participates in protein modification; protein glycosylation. Functionally, catalyzes the initial reaction in O-linked oligosaccharide biosynthesis, the transfer of an N-acetyl-D-galactosamine residue to a serine or threonine residue on the protein receptor. Has activity toward non-glycosylated peptides such as Muc5AC, Muc1a and EA2, and no detectable activity with Muc2 and Muc7. Displays enzymatic activity toward the Gal-NAc-Muc5AC glycopeptide, but no detectable activity to mono-GalNAc-glycosylated Muc1a, Muc2, Muc7 and EA2. May play an important role in the initial step of mucin-type oligosaccharide biosynthesis in digestive organs. In Mus musculus (Mouse), this protein is Polypeptide N-acetylgalactosaminyltransferase 12 (Galnt12).